The sequence spans 1247 residues: E3 ubiquitin-protein ligase hecw-1 (1247 aa).

One can recognise a WW 1 domain in the interval 602-635 (TPPESHWKTYLDAKKRKFYVNHVTKETRWTKPDT). The disordered stretch occupies residues 633 to 659 (PDTLNNNHIEPETPVHKRLSDRSASPR). Positions 641 to 653 (IEPETPVHKRLSD) are enriched in basic and acidic residues. One can recognise a WW 2 domain in the interval 745–777 (QPLPSGWECITMNNRTVFLNHANKETSFYDPRI). An HECT domain is found at 914-1247 (DPFVLKKSRL…IVNGMSYSIE (334 aa)). The active-site Glycyl thioester intermediate is the cysteine 1215.

Expressed in the nervous system throughout the body. In the anterior ganglion, expression is limited to the two lateral outer labial neurons OLLL and OLLR.

It localises to the cytoplasm. It catalyses the reaction S-ubiquitinyl-[E2 ubiquitin-conjugating enzyme]-L-cysteine + [acceptor protein]-L-lysine = [E2 ubiquitin-conjugating enzyme]-L-cysteine + N(6)-ubiquitinyl-[acceptor protein]-L-lysine.. It participates in protein modification; protein ubiquitination. Functionally, E3 ubiquitin-protein ligase. Functions in the OLL neurons in the anterior ganglion to inhibit avoidance to microbial pathogens such as P.aeruginosa although worms do display avoidance behavior, vacating a P.aeruginosa lawn within 24 hours. Likely to act by inhibiting the neuropeptide receptor npr-1. The protein is E3 ubiquitin-protein ligase hecw-1 of Caenorhabditis elegans.